We begin with the raw amino-acid sequence, 620 residues long: MAU2 chromatid cohesion factor homolog (620 aa).

TPR repeat units lie at residues 452 to 485 (GGFY…ANAE) and 492 to 525 (SCSL…ASKI).

It belongs to the SCC4/mau-2 family. In terms of assembly, interacts with Nipped-B to form the cohesin loading complex.

The protein resides in the nucleus. It is found in the nucleoplasm. In terms of biological role, required for association of the cohesin complex with chromatin during interphase. Plays a role in sister chromatid cohesion and normal progression through prometaphase. The protein is MAU2 chromatid cohesion factor homolog of Drosophila persimilis (Fruit fly).